Here is a 942-residue protein sequence, read N- to C-terminus: Chitin synthase 4 (942 aa).

Residues 1–124 (MPPRYPFGGG…FDEHDGDVPL (124 aa)) form a disordered region. Residues 14–26 (DEAHHQPLERRTT) show a composition bias toward basic and acidic residues. Polar residues predominate over residues 27-36 (AEAQGNSFTH). N604 is a glycosylation site (N-linked (GlcNAc...) asparagine). A run of 7 helical transmembrane segments spans residues 641 to 661 (TIQL…FFIL), 674 to 694 (VPNL…FLLS), 709 to 729 (AMVV…YLAV), 755 to 775 (IVIS…MFLE), 783 to 803 (IVQY…YAFA), 885 to 905 (VLCW…ISSI), and 909 to 929 (TIYM…RMMG).

It belongs to the chitin synthase family. Class I subfamily.

Its subcellular location is the cell membrane. The protein localises to the cytoplasmic vesicle membrane. It carries out the reaction [(1-&gt;4)-N-acetyl-beta-D-glucosaminyl](n) + UDP-N-acetyl-alpha-D-glucosamine = [(1-&gt;4)-N-acetyl-beta-D-glucosaminyl](n+1) + UDP + H(+). Functionally, polymerizes chitin, a structural polymer of the cell wall and septum, by transferring the sugar moiety of UDP-GlcNAc to the non-reducing end of the growing chitin polymer. The polypeptide is Chitin synthase 4 (Mycosarcoma maydis (Corn smut fungus)).